Consider the following 80-residue polypeptide: Delta-actitoxin-Amc2a (80 aa).

An N-terminal signal peptide occupies residues 1 to 19 (MNKVLFLCLVVLCATSAFA). The propeptide occupies 20–30 (AEEEYVERAPV). Disulfide bonds link C37–C73, C39–C65, and C55–C74. A Hydroxyproline modification is found at P56.

It belongs to the sea anemone type 3 (BDS) potassium channel toxin family.

The protein resides in the secreted. It is found in the nematocyst. In terms of biological role, neurotoxon that induces paralysis when injected into crabs. This chain is Delta-actitoxin-Amc2a, found in Antheopsis maculata (Sea anemone).